The primary structure comprises 364 residues: MQPGSAPTETYDVQFSEKIERTRDQFKDFFNGEIDAFRSPASEYRMRAEFKIWHDKDTGRACYAMHQPKVKNQVIPIEDFEIGSARIRELMPDVLAAVNNSTLLKQKLFQIEFLTATSGDAVVSLIYHRPLSEQWQAEAEQLQSTLRCQLIGRSRKQKIALGRDYVLETLLVNDKSYTYQQVETGFTQPNAAVCQKMLTWAQTVSADIGGDLLELYCGNGNFTLPLAQNFSRVLATEVSKTSVKSALYNIEQNGATNIAIARLSSEEFTEAMNKVRRFRRLENIDLDSYQFSTIFVDPPRAGLDTDTVKLASRFDNIIYISCNPDTLADNLASLATTHEVTRLALFDQFPYTEHRECGVILRRR.

Residues Gln-188, Tyr-216, Asn-221, Glu-237, and Asp-297 each contribute to the S-adenosyl-L-methionine site. Catalysis depends on Cys-322, which acts as the Nucleophile. Catalysis depends on Glu-356, which acts as the Proton acceptor.

This sequence belongs to the class I-like SAM-binding methyltransferase superfamily. RNA M5U methyltransferase family. TrmA subfamily.

The enzyme catalyses uridine(54) in tRNA + S-adenosyl-L-methionine = 5-methyluridine(54) in tRNA + S-adenosyl-L-homocysteine + H(+). The catalysed reaction is uridine(341) in tmRNA + S-adenosyl-L-methionine = 5-methyluridine(341) in tmRNA + S-adenosyl-L-homocysteine + H(+). In terms of biological role, dual-specificity methyltransferase that catalyzes the formation of 5-methyluridine at position 54 (m5U54) in all tRNAs, and that of position 341 (m5U341) in tmRNA (transfer-mRNA). This chain is tRNA/tmRNA (uracil-C(5))-methyltransferase, found in Teredinibacter turnerae (strain ATCC 39867 / T7901).